The chain runs to 1147 residues: ATP-dependent helicase/deoxyribonuclease subunit B (1147 aa).

Residue 8–15 coordinates ATP; the sequence is GRAGSGKS. Residues Cys786, Cys1106, Cys1109, and Cys1115 each contribute to the [4Fe-4S] cluster site.

This sequence belongs to the helicase family. AddB/RexB type 1 subfamily. In terms of assembly, heterodimer of AddA and AddB. Mg(2+) serves as cofactor. The cofactor is [4Fe-4S] cluster.

Its function is as follows. The heterodimer acts as both an ATP-dependent DNA helicase and an ATP-dependent, dual-direction single-stranded exonuclease. Recognizes the chi site generating a DNA molecule suitable for the initiation of homologous recombination. The AddB subunit has 5' -&gt; 3' nuclease activity but not helicase activity. In Clostridium botulinum (strain Loch Maree / Type A3), this protein is ATP-dependent helicase/deoxyribonuclease subunit B.